A 973-amino-acid chain; its full sequence is Serine/threonine-protein kinase atg1 (973 aa).

The region spanning 23-328 is the Protein kinase domain; that stretch reads YTRLDEIGRG…FPDFFQNGVI (306 aa). Residues 29–37 and K52 contribute to the ATP site; that span reads IGRGSFATV. D166 serves as the catalytic Proton acceptor. Disordered regions lie at residues 338 to 446, 460 to 482, 523 to 587, and 949 to 973; these read DDLP…PGRQ, RQKG…DKLR, GNIS…QSPT, and PTPS…TPPK. Positions 387–407 are enriched in polar residues; sequence GLTQRPPSQNQRFGTPQTTTP. The span at 523–537 shows a compositional bias: polar residues; it reads GNISRGAQTGALSRR. Residues 566 to 582 show a composition bias toward basic and acidic residues; that stretch reads SRADSMHNRQGSYERRY. Residues 951–965 are compositionally biased toward polar residues; sequence PSANVPSKMASSNPV.

Belongs to the protein kinase superfamily. Ser/Thr protein kinase family. APG1/unc-51/ULK1 subfamily. As to quaternary structure, homodimer. Forms a ternary complex with ATG13 and ATG17.

It is found in the cytoplasm. It localises to the preautophagosomal structure membrane. The catalysed reaction is L-seryl-[protein] + ATP = O-phospho-L-seryl-[protein] + ADP + H(+). The enzyme catalyses L-threonyl-[protein] + ATP = O-phospho-L-threonyl-[protein] + ADP + H(+). Its function is as follows. Serine/threonine protein kinase involved in the cytoplasm to vacuole transport (Cvt) and found to be essential in autophagy, where it is required for the formation of autophagosomes. Involved in the clearance of protein aggregates which cannot be efficiently cleared by the proteasome. Required for selective autophagic degradation of the nucleus (nucleophagy) as well as for mitophagy which contributes to regulate mitochondrial quantity and quality by eliminating the mitochondria to a basal level to fulfill cellular energy requirements and preventing excess ROS production. Also involved in endoplasmic reticulum-specific autophagic process, in selective removal of ER-associated degradation (ERAD) substrates. Plays a key role in ATG9 and ATG23 cycling through the pre-autophagosomal structure and is necessary to promote ATG18 binding to ATG9 through phosphorylation of ATG9. Catalyzes phosphorylation of ATG4, decreasing the interaction between ATG4 and ATG8 and impairing deconjugation of PE-conjugated forms of ATG8. The sequence is that of Serine/threonine-protein kinase atg1 from Aspergillus fumigatus (strain ATCC MYA-4609 / CBS 101355 / FGSC A1100 / Af293) (Neosartorya fumigata).